Consider the following 716-residue polypeptide: Calpain clp-4 (716 aa).

Residues 31 to 53 (DDDDKQEAPVAVSKAPKGKGSNH) are disordered. Residues 240 to 536 (LFEDPEFPAT…FTQMEVCNLT (297 aa)) form the Calpain catalytic domain. Residues Cys-295, His-452, and Asn-476 contribute to the active site.

The protein belongs to the peptidase C2 family.

In terms of biological role, calcium-regulated non-lysosomal thiol-protease which catalyzes limited proteolysis of substrates. Promotes starvation-induced muscle atrophy. This chain is Calpain clp-4, found in Caenorhabditis elegans.